The chain runs to 404 residues: Transcriptional repressor OPI1 (404 aa).

A Phosphoserine modification is found at serine 10. The segment at 25–51 is disordered; sequence QSCRQKSQPSEDVSQADKMPASESSTT. Positions 26-37 are enriched in polar residues; that stretch reads SCRQKSQPSEDV. Residues 109–138 are basic motif; the sequence is KRQKLSRAIAKGKDNLKEYKLNMSIESKKR. Residues 139–160 are leucine-zipper; it reads LVTCLHLLKLANKQLSDKISCL. Disordered stretches follow at residues 170 to 201, 305 to 327, and 378 to 404; these read HPLH…DEEF, LQQQ…SSVT, and QQQQ…DSKD. Residues 186–201 are compositionally biased toward acidic residues; the sequence is GEDETSSDEDDDDEEF. Residues 200–206 carry the FFAT motif; the sequence is EFFDASE. Residues 378 to 387 are compositionally biased toward low complexity; sequence QQQQYRQQQQ. The segment covering 394-404 has biased composition (polar residues); it reads KPSQDNVDSKD.

Interacts with SCS2.

The protein resides in the endoplasmic reticulum. It localises to the nucleus. Its function is as follows. Negative regulator of the transcriptional complex INO2-INO4 in response to phospholipid precursor availability. When precursors become limiting, OPI1 is retained at the endoplasmic reticulum (ER) and INO2-INO4 activates INO1 and other genes required for phospholipid biosynthesis, whereas abundant precursor availability results in targeting of OPI1 to the nucleus to repress transcription of these genes. Binds directly to phosphatidic acid, which is required for ER targeting and may act as sensing mechanism for precursor availability, as phosphatidic acid becomes rapidly depleted upon phospholipid biosynthesis. This chain is Transcriptional repressor OPI1 (OPI1), found in Saccharomyces cerevisiae (strain ATCC 204508 / S288c) (Baker's yeast).